The chain runs to 358 residues: tRNA (guanine-N(7)-)-methyltransferase (358 aa).

The tract at residues 1–29 (MTPPPPKRQKRDEYRKATAEATSQSGASD) is disordered. S-adenosyl-L-methionine is bound by residues Gly99 and 122–123 (EI). A compositionally biased stretch (low complexity) spans 151-186 (TATAASETPSQQQAQIDGKQANANAAADAASPAPST). The segment at 151–194 (TATAASETPSQQQAQIDGKQANANAAADAASPAPSTDTEHMPTT) is disordered. Residues 209 to 210 (NT) and Cys229 each bind S-adenosyl-L-methionine. Asp232 is an active-site residue. 330–332 (TEE) contacts S-adenosyl-L-methionine.

It belongs to the class I-like SAM-binding methyltransferase superfamily. TrmB family. As to quaternary structure, forms a complex with trm82.

Its subcellular location is the nucleus. It catalyses the reaction guanosine(46) in tRNA + S-adenosyl-L-methionine = N(7)-methylguanosine(46) in tRNA + S-adenosyl-L-homocysteine. It functions in the pathway tRNA modification; N(7)-methylguanine-tRNA biosynthesis. In terms of biological role, catalyzes the formation of N(7)-methylguanine at position 46 (m7G46) in tRNA. This Aspergillus fumigatus (strain ATCC MYA-4609 / CBS 101355 / FGSC A1100 / Af293) (Neosartorya fumigata) protein is tRNA (guanine-N(7)-)-methyltransferase (trm8).